We begin with the raw amino-acid sequence, 307 residues long: Acetyl-coenzyme A carboxylase carboxyl transferase subunit beta (307 aa).

A disordered region spans residues 1 to 21 (MAMADQRNDKPGRPAAQRERR). The CoA carboxyltransferase N-terminal domain occupies 43–307 (LWVKCPETGE…MGRERLSPAA (265 aa)).

It belongs to the AccD/PCCB family. In terms of assembly, acetyl-CoA carboxylase is a heterohexamer composed of biotin carboxyl carrier protein (AccB), biotin carboxylase (AccC) and two subunits each of ACCase subunit alpha (AccA) and ACCase subunit beta (AccD).

The protein resides in the cytoplasm. It carries out the reaction N(6)-carboxybiotinyl-L-lysyl-[protein] + acetyl-CoA = N(6)-biotinyl-L-lysyl-[protein] + malonyl-CoA. Its pathway is lipid metabolism; malonyl-CoA biosynthesis; malonyl-CoA from acetyl-CoA: step 1/1. In terms of biological role, component of the acetyl coenzyme A carboxylase (ACC) complex. Biotin carboxylase (BC) catalyzes the carboxylation of biotin on its carrier protein (BCCP) and then the CO(2) group is transferred by the transcarboxylase to acetyl-CoA to form malonyl-CoA. The sequence is that of Acetyl-coenzyme A carboxylase carboxyl transferase subunit beta from Phenylobacterium zucineum (strain HLK1).